We begin with the raw amino-acid sequence, 121 residues long: MEAKAIARHIRVTPMKARRVVNLVRGKQANEALAILKFAPQAASEPVFKVLQSAMANARVLADRDGVAFDDSDLFITEAFVDEGPTMKRFQPRAQGRAYRIRKRTSHITLVVATPEKEEAR.

This sequence belongs to the universal ribosomal protein uL22 family. Part of the 50S ribosomal subunit.

Its function is as follows. This protein binds specifically to 23S rRNA; its binding is stimulated by other ribosomal proteins, e.g. L4, L17, and L20. It is important during the early stages of 50S assembly. It makes multiple contacts with different domains of the 23S rRNA in the assembled 50S subunit and ribosome. The globular domain of the protein is located near the polypeptide exit tunnel on the outside of the subunit, while an extended beta-hairpin is found that lines the wall of the exit tunnel in the center of the 70S ribosome. This is Large ribosomal subunit protein uL22 from Paenarthrobacter aurescens (strain TC1).